The primary structure comprises 373 residues: Anhydro-N-acetylmuramic acid kinase (373 aa).

12–19 lines the ATP pocket; that stretch reads GTSLDGVD.

It belongs to the anhydro-N-acetylmuramic acid kinase family.

The enzyme catalyses 1,6-anhydro-N-acetyl-beta-muramate + ATP + H2O = N-acetyl-D-muramate 6-phosphate + ADP + H(+). Its pathway is amino-sugar metabolism; 1,6-anhydro-N-acetylmuramate degradation. The protein operates within cell wall biogenesis; peptidoglycan recycling. In terms of biological role, catalyzes the specific phosphorylation of 1,6-anhydro-N-acetylmuramic acid (anhMurNAc) with the simultaneous cleavage of the 1,6-anhydro ring, generating MurNAc-6-P. Is required for the utilization of anhMurNAc either imported from the medium or derived from its own cell wall murein, and thus plays a role in cell wall recycling. The sequence is that of Anhydro-N-acetylmuramic acid kinase from Salmonella newport (strain SL254).